The chain runs to 209 residues: Large ribosomal subunit protein uL3c (209 aa).

Residues 132-154 (PMSHGSKNHRLPGSIGAGSTPGR) form a disordered region.

This sequence belongs to the universal ribosomal protein uL3 family. In terms of assembly, part of the 50S ribosomal subunit.

The protein resides in the plastid. It is found in the cyanelle. In terms of biological role, one of the primary rRNA binding proteins, it binds directly near the 3'-end of the 23S rRNA, where it nucleates assembly of the 50S subunit. This Cyanophora paradoxa protein is Large ribosomal subunit protein uL3c (rpl3).